The sequence spans 156 residues: Small ribosomal subunit protein uS7 (156 aa).

It belongs to the universal ribosomal protein uS7 family. In terms of assembly, part of the 30S ribosomal subunit. Contacts proteins S9 and S11.

Functionally, one of the primary rRNA binding proteins, it binds directly to 16S rRNA where it nucleates assembly of the head domain of the 30S subunit. Is located at the subunit interface close to the decoding center, probably blocks exit of the E-site tRNA. The sequence is that of Small ribosomal subunit protein uS7 from Corynebacterium jeikeium (strain K411).